Consider the following 418-residue polypeptide: CCA-adding enzyme (418 aa).

The ATP site is built by Ser54 and Arg57. CTP-binding residues include Ser54 and Arg57. Mg(2+)-binding residues include Asp66, Asp68, and Asp118. ATP-binding residues include His141, Lys161, and Tyr170. CTP contacts are provided by His141, Lys161, and Tyr170.

This sequence belongs to the tRNA nucleotidyltransferase/poly(A) polymerase family. Archaeal CCA-adding enzyme subfamily. As to quaternary structure, homodimer. Mg(2+) is required as a cofactor.

The enzyme catalyses a tRNA precursor + 2 CTP + ATP = a tRNA with a 3' CCA end + 3 diphosphate. The catalysed reaction is a tRNA with a 3' CCA end + 2 CTP + ATP = a tRNA with a 3' CCACCA end + 3 diphosphate. In terms of biological role, catalyzes the addition and repair of the essential 3'-terminal CCA sequence in tRNAs without using a nucleic acid template. Adds these three nucleotides in the order of C, C, and A to the tRNA nucleotide-73, using CTP and ATP as substrates and producing inorganic pyrophosphate. tRNA 3'-terminal CCA addition is required both for tRNA processing and repair. Also involved in tRNA surveillance by mediating tandem CCA addition to generate a CCACCA at the 3' terminus of unstable tRNAs. While stable tRNAs receive only 3'-terminal CCA, unstable tRNAs are marked with CCACCA and rapidly degraded. In Pyrobaculum islandicum (strain DSM 4184 / JCM 9189 / GEO3), this protein is CCA-adding enzyme.